The sequence spans 338 residues: Ketol-acid reductoisomerase (NADP(+)) (338 aa).

Positions Met-1–Thr-181 constitute a KARI N-terminal Rossmann domain. Residues Tyr-24–Gln-27, Arg-47, Ser-50, Thr-52, and Asp-82–Gln-85 contribute to the NADP(+) site. The active site involves His-107. Gly-133 provides a ligand contact to NADP(+). One can recognise a KARI C-terminal knotted domain in the interval Thr-182–Ile-327. Residues Asp-190, Glu-194, Glu-226, and Glu-230 each coordinate Mg(2+). Ser-251 serves as a coordination point for substrate.

This sequence belongs to the ketol-acid reductoisomerase family. Requires Mg(2+) as cofactor.

It carries out the reaction (2R)-2,3-dihydroxy-3-methylbutanoate + NADP(+) = (2S)-2-acetolactate + NADPH + H(+). It catalyses the reaction (2R,3R)-2,3-dihydroxy-3-methylpentanoate + NADP(+) = (S)-2-ethyl-2-hydroxy-3-oxobutanoate + NADPH + H(+). Its pathway is amino-acid biosynthesis; L-isoleucine biosynthesis; L-isoleucine from 2-oxobutanoate: step 2/4. It participates in amino-acid biosynthesis; L-valine biosynthesis; L-valine from pyruvate: step 2/4. Functionally, involved in the biosynthesis of branched-chain amino acids (BCAA). Catalyzes an alkyl-migration followed by a ketol-acid reduction of (S)-2-acetolactate (S2AL) to yield (R)-2,3-dihydroxy-isovalerate. In the isomerase reaction, S2AL is rearranged via a Mg-dependent methyl migration to produce 3-hydroxy-3-methyl-2-ketobutyrate (HMKB). In the reductase reaction, this 2-ketoacid undergoes a metal-dependent reduction by NADPH to yield (R)-2,3-dihydroxy-isovalerate. The chain is Ketol-acid reductoisomerase (NADP(+)) from Pseudomonas fluorescens (strain SBW25).